Here is a 345-residue protein sequence, read N- to C-terminus: DNA-directed RNA polymerase subunit alpha (345 aa).

Residues 1–241 are alpha N-terminal domain (alpha-NTD); sequence MLRDTHLALQ…DQLGMFINFE (241 aa). Positions 257–345 are alpha C-terminal domain (alpha-CTD); sequence FNPNLLRKVD…ELVKRSDNPF (89 aa).

This sequence belongs to the RNA polymerase alpha chain family. As to quaternary structure, homodimer. The RNAP catalytic core consists of 2 alpha, 1 beta, 1 beta' and 1 omega subunit. When a sigma factor is associated with the core the holoenzyme is formed, which can initiate transcription.

The catalysed reaction is RNA(n) + a ribonucleoside 5'-triphosphate = RNA(n+1) + diphosphate. Functionally, DNA-dependent RNA polymerase catalyzes the transcription of DNA into RNA using the four ribonucleoside triphosphates as substrates. This Acidiphilium cryptum (strain JF-5) protein is DNA-directed RNA polymerase subunit alpha.